The following is a 341-amino-acid chain: tRNA N6-adenosine threonylcarbamoyltransferase (341 aa).

Fe cation is bound by residues H110 and H114. Substrate-binding positions include L133–G137, D166, G179, and N276. Residue D304 coordinates Fe cation.

The protein belongs to the KAE1 / TsaD family. Requires Fe(2+) as cofactor.

It is found in the cytoplasm. The enzyme catalyses L-threonylcarbamoyladenylate + adenosine(37) in tRNA = N(6)-L-threonylcarbamoyladenosine(37) in tRNA + AMP + H(+). Required for the formation of a threonylcarbamoyl group on adenosine at position 37 (t(6)A37) in tRNAs that read codons beginning with adenine. Is involved in the transfer of the threonylcarbamoyl moiety of threonylcarbamoyl-AMP (TC-AMP) to the N6 group of A37, together with TsaE and TsaB. TsaD likely plays a direct catalytic role in this reaction. This Saccharophagus degradans (strain 2-40 / ATCC 43961 / DSM 17024) protein is tRNA N6-adenosine threonylcarbamoyltransferase.